The sequence spans 96 residues: uncharacterized protein (96 aa).

A helical membrane pass occupies residues 53 to 71 (VLLMPLLQSFVLSLALMGV).

Its subcellular location is the membrane. This is an uncharacterized protein from Saccharomyces cerevisiae (strain ATCC 204508 / S288c) (Baker's yeast).